A 161-amino-acid polypeptide reads, in one-letter code: uncharacterized protein (161 aa).

Polar residues predominate over residues 1 to 10 (MSKQQEQDTP). Disordered regions lie at residues 1–20 (MSKQ…QRLQ), 55–84 (KKTR…MSDE), and 118–161 (LLQQ…ANNS). A coiled-coil region spans residues 82–107 (SDEEYARQLQEEMDRLDASIQMDKEA). Residues 144 to 161 (QQSSNTTTSSSCQSANNS) are compositionally biased toward low complexity.

This is an uncharacterized protein from Caenorhabditis elegans.